Consider the following 308-residue polypeptide: Putative lipid kinase SH2167 (308 aa).

The region spanning 1-139 (MGQKFNHGVL…YDVMKVNGTY (139 aa)) is the DAGKc domain. Residues Ser44, 74–80 (GDGTVNE), and Thr101 each bind ATP. Mg(2+) is bound by residues Ser220, Asp223, and Lys225. Glu281 serves as the catalytic Proton acceptor.

This sequence belongs to the diacylglycerol/lipid kinase family. Mg(2+) serves as cofactor.

In terms of biological role, may catalyze the ATP-dependent phosphorylation of lipids other than diacylglycerol (DAG). In Staphylococcus haemolyticus (strain JCSC1435), this protein is Putative lipid kinase SH2167.